An 82-amino-acid polypeptide reads, in one-letter code: Cytochrome b559 subunit alpha (82 aa).

The helical transmembrane segment at 21 to 35 threads the bilayer; that stretch reads VIHSITVPALFIAGW. His23 is a heme binding site.

The protein belongs to the PsbE/PsbF family. Heterodimer of an alpha subunit and a beta subunit. PSII is composed of 1 copy each of membrane proteins PsbA, PsbB, PsbC, PsbD, PsbE, PsbF, PsbH, PsbI, PsbJ, PsbK, PsbL, PsbM, PsbT, PsbX, PsbY, PsbZ, Psb30/Ycf12, at least 3 peripheral proteins of the oxygen-evolving complex and a large number of cofactors. It forms dimeric complexes. Heme b is required as a cofactor.

The protein localises to the plastid. It localises to the chloroplast thylakoid membrane. Its function is as follows. This b-type cytochrome is tightly associated with the reaction center of photosystem II (PSII). PSII is a light-driven water:plastoquinone oxidoreductase that uses light energy to abstract electrons from H(2)O, generating O(2) and a proton gradient subsequently used for ATP formation. It consists of a core antenna complex that captures photons, and an electron transfer chain that converts photonic excitation into a charge separation. The polypeptide is Cytochrome b559 subunit alpha (Chlamydomonas reinhardtii (Chlamydomonas smithii)).